Here is a 326-residue protein sequence, read N- to C-terminus: Probable cell division protein WhiA (326 aa).

Positions 275-308 (SLDELGRLADPPMTKDAIAGRIRRLLAMADKRAS) form a DNA-binding region, H-T-H motif.

Belongs to the WhiA family.

In terms of biological role, involved in cell division and chromosome segregation. The chain is Probable cell division protein WhiA from Renibacterium salmoninarum (strain ATCC 33209 / DSM 20767 / JCM 11484 / NBRC 15589 / NCIMB 2235).